The sequence spans 269 residues: MTVLDSILDGVRADVAAREAVLDFAAVKAAAAAAPPALDAAAALLEPGIGVIAEVKRASPSKGALADIADPAELAAAYQAGGARVISVLTEERRFQGSLADLDAVRRAVSIPILRKDFIVGPYQIHEARAHGADMVLLIVAALEQDALASLIDRTESLGMTALVEVHTEEEANRAIEAGAKVIGVNARNLKTLEVDKNTFGEIAPGLPTEIIKIAESGVRGTADLLAYAGAGADAVLVGEGLVTSGDPRKAVADLVNAGAHPSCPKPSR.

This sequence belongs to the TrpC family.

The enzyme catalyses 1-(2-carboxyphenylamino)-1-deoxy-D-ribulose 5-phosphate + H(+) = (1S,2R)-1-C-(indol-3-yl)glycerol 3-phosphate + CO2 + H2O. It functions in the pathway amino-acid biosynthesis; L-tryptophan biosynthesis; L-tryptophan from chorismate: step 4/5. The protein is Indole-3-glycerol phosphate synthase of Rhodococcus opacus (strain B4).